Reading from the N-terminus, the 1554-residue chain is Myosin-2 (1554 aa).

The Myosin N-terminal SH3-like domain occupies 4–57; it reads EVGTRCWYPDKQQGWIGGEITKHTNLSNKHQLELTLEDNQIVEIESETLDETKD. The 705-residue stretch at 70-774 folds into the Myosin motor domain; sequence EATEDLTSLS…MLAYLEKLRS (705 aa). Residue 164-171 coordinates ATP; it reads GESGAGKT. Residues 443–523 form an actin-binding region; that stretch reads FIGVLDIYGF…LGILSLLDEE (81 aa). IQ domains follow at residues 778 to 798, 800 to 824, 825 to 847, 848 to 872, 873 to 895, and 896 to 925; these read HNSS…KKYL, IISS…DLEF, KTQA…KTIS, LLSA…LQRR, QRDA…SFNT, and TRRS…EAKS. Positions 926 to 1079 form a coiled coil; the sequence is VNHLKEVSYK…IARLQAAVRS (154 aa). The interval 1080–1554 is non alpha-helical, tail domain; it reads GVTSSTITST…VTVQESQRTE (475 aa). Residues 1082–1093 are compositionally biased toward low complexity; sequence TSSTITSTPTAS. A disordered region spans residues 1082-1109; sequence TSSTITSTPTASRRFSAHSSVADGTSPR. Over residues 1098–1109 the composition is skewed to polar residues; it reads AHSSVADGTSPR. The Dilute domain occupies 1205 to 1480; sequence AEVLSTIQKL…LNFVADRVKK (276 aa).

The protein belongs to the TRAFAC class myosin-kinesin ATPase superfamily. Myosin family. As to quaternary structure, homodimer. Interacts with calmodulin (CMD1) and the myosin light chain MLC1 through its IQ repeats.

Myosin heavy chain that is required for the cell cycle-regulated transport of various organelles and proteins for their segregation. Functions by binding with its tail domain to receptor proteins on organelles and exerting force with its N-terminal motor domain against actin filaments, thereby transporting its cargo along polarized actin cables. The polypeptide is Myosin-2 (MYO2) (Lachancea kluyveri (strain ATCC 58438 / CBS 3082 / BCRC 21498 / NBRC 1685 / JCM 7257 / NCYC 543 / NRRL Y-12651) (Yeast)).